We begin with the raw amino-acid sequence, 268 residues long: MASIELRNVQTELAAKNLQFKVLTEKFLEQRKELFDAKKTDSNVEYVECLSEKLRVATERISDLEKETKEGKQVANEEIGRLEKLLREAQQKRDAKIDESYQTFLRIELLVANLGESTDPENEKRIKNLMPAAKTGIPPEGVLRLTINALDSAARESKKKTMAIESLTKQVDDANKLTEVYMKRLEELEDKHRFEEALTLKIQAMMIETTGQLEAQKKIIADLQKKNDDLMKEEEGEEDYEEEENYEVEEDFEDEEEYDEEGEEEDYE.

Positions 171–243 form a coiled coil; the sequence is VDDANKLTEV…EEGEEDYEEE (73 aa). The tract at residues 229 to 268 is disordered; it reads DLMKEEEGEEDYEEEENYEVEEDFEDEEEYDEEGEEEDYE. Residues 231–268 are compositionally biased toward acidic residues; sequence MKEEEGEEDYEEEENYEVEEDFEDEEEYDEEGEEEDYE.

It is found in the nucleus. Functionally, plays a role in meiosis, germline development and oocyte morphogenesis. May play a role in DNA replication. In the germline, involved in the maintenance of transition zone nuclei and in chromosome structure and organization, but not required for mitotic proliferation. The protein is Protein atz-1 of Caenorhabditis elegans.